A 429-amino-acid chain; its full sequence is Trigger factor (429 aa).

Positions 161–246 (GDRLSIDFKG…INEIASPKEL (86 aa)) constitute a PPIase FKBP-type domain.

The protein belongs to the FKBP-type PPIase family. Tig subfamily.

Its subcellular location is the cytoplasm. It carries out the reaction [protein]-peptidylproline (omega=180) = [protein]-peptidylproline (omega=0). In terms of biological role, involved in protein export. Acts as a chaperone by maintaining the newly synthesized protein in an open conformation. Functions as a peptidyl-prolyl cis-trans isomerase. This is Trigger factor from Vesicomyosocius okutanii subsp. Calyptogena okutanii (strain HA).